The following is a 356-amino-acid chain: Metacaspase-1 (356 aa).

Residues 1-47 (MYSGRSGAPPPAHSPYPNSYNHGPPGHSAGHNVPPPPPTQPVQFGHG) are disordered. Residues H147 and C203 contribute to the active site.

This sequence belongs to the peptidase C14B family.

Its function is as follows. Involved in cell death (apoptosis). The protein is Metacaspase-1 (MCA1) of Ajellomyces capsulatus (strain NAm1 / WU24) (Darling's disease fungus).